The following is a 252-amino-acid chain: Indole-3-glycerol phosphate synthase (252 aa).

Belongs to the TrpC family.

It carries out the reaction 1-(2-carboxyphenylamino)-1-deoxy-D-ribulose 5-phosphate + H(+) = (1S,2R)-1-C-(indol-3-yl)glycerol 3-phosphate + CO2 + H2O. It functions in the pathway amino-acid biosynthesis; L-tryptophan biosynthesis; L-tryptophan from chorismate: step 4/5. The protein is Indole-3-glycerol phosphate synthase of Listeria monocytogenes serovar 1/2a (strain ATCC BAA-679 / EGD-e).